A 249-amino-acid chain; its full sequence is Exosome complex component Rrp41 (249 aa).

This sequence belongs to the RNase PH family. Rrp41 subfamily. As to quaternary structure, component of the archaeal exosome complex. Forms a hexameric ring-like arrangement composed of 3 Rrp41-Rrp42 heterodimers. The hexameric ring associates with a trimer of Rrp4 and/or Csl4 subunits.

It localises to the cytoplasm. Functionally, catalytic component of the exosome, which is a complex involved in RNA degradation. Has 3'-&gt;5' exoribonuclease activity. Can also synthesize heteromeric RNA-tails. The polypeptide is Exosome complex component Rrp41 (Thermococcus onnurineus (strain NA1)).